Consider the following 261-residue polypeptide: Cytochrome c oxidase subunit 3 (261 aa).

At Met-1–Pro-15 the chain is on the mitochondrial matrix side. Residues Trp-16 to Trp-34 form a helical membrane-spanning segment. Residues Phe-35 to Thr-40 are Mitochondrial intermembrane-facing. A helical membrane pass occupies residues Thr-41–Thr-66. Residues Phe-67–Thr-72 are Mitochondrial matrix-facing. A helical membrane pass occupies residues Pro-73 to Ser-105. Topologically, residues Leu-106–Glu-128 are mitochondrial intermembrane. Residues Val-129–Met-152 form a helical membrane-spanning segment. Over Glu-153 to Asn-155 the chain is Mitochondrial matrix. Residues Arg-156–Glu-183 form a helical membrane-spanning segment. The Mitochondrial intermembrane portion of the chain corresponds to Ala-184–Asp-190. A helical transmembrane segment spans residues Gly-191–Leu-223. Residues Lys-224–His-232 lie on the Mitochondrial matrix side of the membrane. A helical membrane pass occupies residues Phe-233 to Ile-256. Residues Tyr-257–Ser-261 lie on the Mitochondrial intermembrane side of the membrane.

This sequence belongs to the cytochrome c oxidase subunit 3 family. In terms of assembly, component of the cytochrome c oxidase (complex IV, CIV), a multisubunit enzyme composed of 14 subunits. The complex is composed of a catalytic core of 3 subunits MT-CO1, MT-CO2 and MT-CO3, encoded in the mitochondrial DNA, and 11 supernumerary subunits COX4I, COX5A, COX5B, COX6A, COX6B, COX6C, COX7A, COX7B, COX7C, COX8 and NDUFA4, which are encoded in the nuclear genome. The complex exists as a monomer or a dimer and forms supercomplexes (SCs) in the inner mitochondrial membrane with NADH-ubiquinone oxidoreductase (complex I, CI) and ubiquinol-cytochrome c oxidoreductase (cytochrome b-c1 complex, complex III, CIII), resulting in different assemblies (supercomplex SCI(1)III(2)IV(1) and megacomplex MCI(2)III(2)IV(2)).

Its subcellular location is the mitochondrion inner membrane. It catalyses the reaction 4 Fe(II)-[cytochrome c] + O2 + 8 H(+)(in) = 4 Fe(III)-[cytochrome c] + 2 H2O + 4 H(+)(out). In terms of biological role, component of the cytochrome c oxidase, the last enzyme in the mitochondrial electron transport chain which drives oxidative phosphorylation. The respiratory chain contains 3 multisubunit complexes succinate dehydrogenase (complex II, CII), ubiquinol-cytochrome c oxidoreductase (cytochrome b-c1 complex, complex III, CIII) and cytochrome c oxidase (complex IV, CIV), that cooperate to transfer electrons derived from NADH and succinate to molecular oxygen, creating an electrochemical gradient over the inner membrane that drives transmembrane transport and the ATP synthase. Cytochrome c oxidase is the component of the respiratory chain that catalyzes the reduction of oxygen to water. Electrons originating from reduced cytochrome c in the intermembrane space (IMS) are transferred via the dinuclear copper A center (CU(A)) of subunit 2 and heme A of subunit 1 to the active site in subunit 1, a binuclear center (BNC) formed by heme A3 and copper B (CU(B)). The BNC reduces molecular oxygen to 2 water molecules using 4 electrons from cytochrome c in the IMS and 4 protons from the mitochondrial matrix. The sequence is that of Cytochrome c oxidase subunit 3 (MT-CO3) from Gazella cuvieri (Cuvier's gazelle).